Reading from the N-terminus, the 457-residue chain is Putative purine-cytosine permease YxlA (457 aa).

12 helical membrane passes run 24–44 (FPVW…TIPV), 50–70 (LFWS…FMAS), 90–110 (FGVI…LGFF), 127–147 (IPGS…TIFG), 164–184 (AVFF…GSWI), 192–212 (IFLV…PYVA), 228–248 (FWYS…LGAL), 264–284 (IVQL…FGQM), 316–336 (IIMI…GQSN), 341–361 (FLNF…INLV), 392–412 (IAFV…FYIG), and 420–440 (GGDI…YVLM).

This sequence belongs to the purine-cytosine permease (2.A.39) family.

It localises to the cell membrane. The polypeptide is Putative purine-cytosine permease YxlA (yxlA) (Bacillus subtilis (strain 168)).